The sequence spans 298 residues: 4-diphosphocytidyl-2-C-methyl-D-erythritol kinase (298 aa).

K15 is an active-site residue. Residue 102 to 112 (PVAAGIGGGSS) participates in ATP binding. D142 is an active-site residue.

This sequence belongs to the GHMP kinase family. IspE subfamily.

The enzyme catalyses 4-CDP-2-C-methyl-D-erythritol + ATP = 4-CDP-2-C-methyl-D-erythritol 2-phosphate + ADP + H(+). It functions in the pathway isoprenoid biosynthesis; isopentenyl diphosphate biosynthesis via DXP pathway; isopentenyl diphosphate from 1-deoxy-D-xylulose 5-phosphate: step 3/6. Functionally, catalyzes the phosphorylation of the position 2 hydroxy group of 4-diphosphocytidyl-2C-methyl-D-erythritol. The chain is 4-diphosphocytidyl-2-C-methyl-D-erythritol kinase from Hyphomonas neptunium (strain ATCC 15444).